The chain runs to 341 residues: tRNA N6-adenosine threonylcarbamoyltransferase (341 aa).

Fe cation is bound by residues His115 and His119. Residues 137–141 (IVSGG), Asp170, Gly183, Asp187, and Asn276 contribute to the substrate site. Fe cation is bound at residue Asp304.

This sequence belongs to the KAE1 / TsaD family. Fe(2+) is required as a cofactor.

It is found in the cytoplasm. The enzyme catalyses L-threonylcarbamoyladenylate + adenosine(37) in tRNA = N(6)-L-threonylcarbamoyladenosine(37) in tRNA + AMP + H(+). Its function is as follows. Required for the formation of a threonylcarbamoyl group on adenosine at position 37 (t(6)A37) in tRNAs that read codons beginning with adenine. Is involved in the transfer of the threonylcarbamoyl moiety of threonylcarbamoyl-AMP (TC-AMP) to the N6 group of A37, together with TsaE and TsaB. TsaD likely plays a direct catalytic role in this reaction. The chain is tRNA N6-adenosine threonylcarbamoyltransferase from Staphylococcus aureus (strain Mu3 / ATCC 700698).